The primary structure comprises 323 residues: Protoheme IX farnesyltransferase (323 aa).

A run of 8 helical transmembrane segments spans residues 28-48 (IIPL…EGRV), 50-70 (LFTL…AQVM), 101-121 (FIFA…FVNL), 122-142 (LSGL…THLL), 150-170 (IVIG…AVTG), 178-198 (ILFA…ALMI), 235-255 (FLLV…AIIL), and 282-302 (FSIF…LPLT).

This sequence belongs to the UbiA prenyltransferase family. Protoheme IX farnesyltransferase subfamily.

It localises to the cell inner membrane. It carries out the reaction heme b + (2E,6E)-farnesyl diphosphate + H2O = Fe(II)-heme o + diphosphate. It functions in the pathway porphyrin-containing compound metabolism; heme O biosynthesis; heme O from protoheme: step 1/1. Functionally, converts heme B (protoheme IX) to heme O by substitution of the vinyl group on carbon 2 of heme B porphyrin ring with a hydroxyethyl farnesyl side group. This is Protoheme IX farnesyltransferase from Rippkaea orientalis (strain PCC 8801 / RF-1) (Cyanothece sp. (strain PCC 8801)).